The sequence spans 126 residues: Fluoride-specific ion channel FluC (126 aa).

4 consecutive transmembrane segments (helical) span residues 1-21, 33-53, 72-92, and 97-117; these read MTAT…RFHA, AVFP…MGVL, VGVL…ALLV, and IGLA…GLFL. Na(+) is bound by residues Gly-76 and Thr-79.

The protein belongs to the fluoride channel Fluc/FEX (TC 1.A.43) family.

The protein localises to the cell inner membrane. The catalysed reaction is fluoride(in) = fluoride(out). Na(+) is not transported, but it plays an essential structural role and its presence is essential for fluoride channel function. Fluoride-specific ion channel. Important for reducing fluoride concentration in the cell, thus reducing its toxicity. The sequence is that of Fluoride-specific ion channel FluC from Novosphingobium aromaticivorans (strain ATCC 700278 / DSM 12444 / CCUG 56034 / CIP 105152 / NBRC 16084 / F199).